The sequence spans 6919 residues: MEQSTFATAGSPNRTVTNNEVVEKDIREICAEVLRRPVGKIKLDKSFIAQGGDSLLAIKLMARCGEAGYTITINDMLQATSIRELCQSVKLAEGSSAPGKLSSGPVLDGPAQPAEIRTKPLTEAQKLYASTKAWDAKVFKLEGGIAESTLYAALKLLVSHHPILRANFTTLENNDLGLTYNDTIDAFAHRRIEIPTISTQAEQGYLTVGWEADGKREDGLFAATVFVQKDRDHGTCLARYLRLDFHRAIIDVSSWDILQRDLDHAVLGKPLARGYPETSFDSWASTHNLSDFTFRRSTPVESTNDERNTNERQHNRHQNDGKIELADVVILETDAAGLAKLEDESIHSVLRTQPEDFIVAALHIALKGVTRSEETLSFGIISNGRHSGGPKLSATVGCFDNIIRRSVERAEEDGGLGFLRKVKDTRMGFFNVSRISGVEDRSRYVLLHMGQLGRTTAPIADTLHELFHQDDFSILPHGCLAFVEPFLEQQQLKLRLRSRSAELGREKLGQLAGLFRAALKELIAECEMSEVQGTLSDFPFLKLTYSELDNLVSSRLKAVTGDPFRDVEAVFPCGPRQEAFLVAQAVYPDLYQCSFVIKLSSEDLNVELDCGRLRDAWVRLVARHPALRTVFIESPNRQGHFDQVVMKQGISSITFLENEGEEAARRLACRRPVTFKSYGQTHQVTFCRISPSSVYLRLDMSHAVVDGLSALVLMRDLFQLYSKQKLASRVMAYQDFVNYQSRLPMQESMTYWSNYLAGAQPSHFPLYGDQLSREDLRTVRSNIQLGSDVLGEFCAWALVLRSYTGLEDVCFSYATSGRDVPLKGINNTVGAFLNAVVCRIKLPPTATVPQALVKARNDFVESLSHQYYLALDDAQSGDFARFKSNTLMSCQRKAATELAGSGLAFELVDAANPNEYDMSINIQVGHEGLEVMIDYWNSRIGQRTVESVAQSFRQALLNIVKEEDAVLGEIDISTTQEINQLREWAKEIPPKADYRIHDKVYEQRLRRPDAWAVQGWDGDLTYQQLDDTANQLASYLIRLGVQPETKIPICFEKSKWAVISQLAILKAGGCVVPLGTTQPASRTRLILKDLQATIILTSGKFASRFMDLVTHTVVIDEAFMAELPPSEMVPCLATVDNAAFIIYTSGSTGVPKGVVLPHASLCTSLEHMGARFKLSPDTRTVQFSAYTFDISIQDIYTTWHYGGCLIILSEEDRISNLAPEMVKYQVNCAGLTSTVAGTIFPQDVPTLKKLVLLGEAVKQAVVDQWIGHVEVYNAYGPSECSMQASINRLTPGCNALNIGWAFAGALWVVDPNDYNRLVPIGAPGELLIEGPLQARGYLNSPEKTAAAFVVDAAWMIKNGFGSGRRLYRTGDLVQQNPDGSITYIGRRDTQIKVRGQRVEVGEIEHHLLQQDAVLDAAIIYPKQGPCKDRLVGLLTLRDFFCGKRPGQDIIPIPSGKLSHTKSQLAAASEELSNHVPEHMVPKIWIPLESMMPQNDSSKLDRKKLGVWLEAIDTAFLEALTKSSDAGSESREPETLLERQVQQAWADVLRLPPTQIPIEHKSFLSVGGDSITAMHVVSWLRVRGITVAVRDVLESKSVAQLAQTAEVKDEKTEGHQSLLSPMQKWYFESIADPELPLKSSGAHRYNSNICLVPRKLFEYSELAQAVGALVDRHPILRSRFQRHNVAGWQQSLHSDGDQPFALRHYTVSTSEEAEALIVEAQGSLDLEQGPVFFVEYIQVEDARNTDLLFMTAHRLVVDEVSWDIIRRDISVLLEGQQFPTSNPLSFQTWIKLQAQRSQNLEGIVFRSDLPPADFKYWGLNDGNTYEDETVEEVIFNSHDTNAYFRDANRALRTERVEILLAALLKSFQKTFPNRRLPAVFEINDGRNVGDSGLDFSNTVGNFECMTPIHIFLDEPHNGLDIVRQTKDARRSAFGRVLSDGQQAFTDRWVEVLFQYSEGLASETIFETVDLTGPGTSPVGKSTRRGCVFNVNVIAYPDKLRIRFKFNRNMKYQEKIRDWADSYANAISALGTELSGASPTLTVTDFPLLHLTSESLRVLQDEILPDAGLNCSDVEDIYPCSPIQQGILISQVKSPSEYYIQQSFEIIPTTSSGKLDHTRLLAAWQVLINRHPMLRTRFVRSASGSSERLFDQVVLKSCKAEAEHVECTDDDLFRNLAVKATLDERHIDKRIGHKLTIYSTSSNRTFGNIIISHALVDASSLMIIQAELAQAYDGKLAPDTIGAAYSEYISHLQKIPADQALDYWAKRLADAEPCYLRGMTEDGMQPATADDSTPRRPMQTVSIDINCIEKLHSFTETYGVTIANVFQLVWAMVLAQYTGSPNVSFGYLSSGRDVPVKDVETMVGPLINMMVTHIKLDMEASAQNTLKQIQENFFESFNYQRAPLVEIWHALQLQGRSLFNTALSYRHIVSAEKHQLSLALEQITGEDPTEYDVTVSVFASPEKISASLQYSPDFLSYDSANRLLGCVRQGIQSLVTNGDTHVGQLNTVTPKDILQVRAWNDKIPAVDGYCLIHDLFNEQRLLRPNATAVCAWDGDLTYQQLDEMSNALAHHLVTLGIGPEVMVALCLDKSKFAIIAQLSVLKAAGVVVSINPKHPTQRLELVLKDINAKVMLTSHQYSSQFRNLVPHILHMDETLFSALSSQPQPPSTNVTPNNAAFIIYTSGSTGMPKGVILTHLSLCSSFRAHGKIYEMSPSTRSLQFAAYTFDASISDIWGTMSHGGCVCVISEEERMNNLQGVIEAYGATHAQVTPTVASLLDIANIKCLTTLILGGEAVREAMIEEHAKAAGRVKVLNGYGPSECSIYTTCSAALVQKKQALNIGRPLVGSVWVIANGESICPIGAVGELWVEGPLLARGYHNDPKKTKAAFVTNPKWAKAIRLEGHRFYNTGDLVRQSPNGDLIYQARKDSQVKVRGQRVEIGEIEYRVKKLLPAVKSLVASLITPGGNSPNIMISVAMELSDDFLQRHLLSAPFHEIFLPNAPHLRDAFSQLHASLLEVLPSYMVPRLFVPVVHLPQTTSSKLDRRTIKQMLENLPGDVLFQYSLSTSLSVAPSTFMEKKLQSLWATVLNVDQDHVGVQDHFLHCGGDSFTAMRLVSLANAKDIPISVADVFRYPKLQEMAAHLEAQMGRRRDVQDIPRFGLWKEAQQTEASVSERELLRVAKLCDVAVHDIEDVYPCTPLQEGLMAITTQQPGSYIGRWVFRIQEAVDTNAFKRAWSSLTQKAPILRTRIAPSQSGGLQVVVRESVAWGGDLNLKQYLDKDLQQSFGYGQPLVRQALIYSGNKRYFVLTAHHSVYDGYSLRKLFDAVALLYDGKELAPTPAFSRFISYIGQQDLKAAKSFWQSQIKRKVGAPFPSLHKLSYRPQPTQKLSSSVEIRPVGGPNTLASSLRAAWALAISAYGGNDVLFGVALSGRSAPVPGILDMAAPTITTVPVHVHINPEQTINQYLTMVHKQSVDMIPFEHTGLQNIRRFVGQIDLPHLFAVQPAQERESSVHGKLLAYEHGHVPELNLDGYALTVECVTSDISDIPVTIEAHFDERMISASQTNDLLSRFSHIVTQLVTNGRDQTQLKYLDLLSKDEARRLFQFNQGIPPVKQALVHELVSQHVSTNPYAPAVCAWDGDLTREELDRLANKLALYLTTLGVIPETMVALCFEKSKWALVANLAVLKAGGAVVPIRADPIQRVQNILQQTGITTILASEGFASALEGLVPNVITIGDDLIQSLPSPVTQPISTVTPSNAAFVIFTSGSTGNPKGVVVEHGAMSTSMQAHGKKFGMNSETRAFNFAHFTFDISLHDIISTLQFGGCVCMPSERERVNNMADAMNRMGVNYSFLPPRVIHTIKPSDVPGLKTLVVGGEAVQPEYLEPWLNGVRVFNAYGPAECSIAATCNEVANKADVPNIGRAIAGGLWVVDENNYNRLLPLGAVGELLIEGPLLARGYLNDPIKTANAFICNPAWISRYSEHDHCSQRRERRMYRTGDLVRQMEDGSLIYVGRRDGQVKIRGQRVEIGEIEHHVTEHPSVVENVIVYPHCGPAQLQLVGILTLHGFISSDADEGIQTTPLDQLPHALQQASSVRDHLHSCIPEYMVPNSWISLAAMPHNSSDKIDRRRLTQWLETMEVEHFKILTQSYTEGTTTPSTSEEKNIQAVWADVLHASIGKVPMSRPFLAVGGDSVTAMQVVSKCRSQYSIYVTVRDVLQCESISQLAKKAVIKTTSPNTDTQLSTSSIDQAPAATSAPTAFDINASDLSKLETDVLPRTGVENLSAIESIYYCSPIQQGILMSQIKDHTTYQVRQAGEIRAADSSPVDMNRLLRAWQLVVQRHAILRTFFVPSPSGRELFYQVVLKRYTPTIPVLQSCSSDDFLAQFEGLERPEYAPGQPPYQLTLAQASTGQVYAQVDVNHVLMDASSMDLILNDLILAYDNMLPDSPAPSYGIYVSFLQQTFAFDSLNYWTNHLAGAEPSCLPASSNLDSGKRSLRTVSLEVDNIKPLQDFRDTHGVTIANITQLAWATVLSRYLGSRDVSFGYISNGRDAPIDGIHEMCGPMINLMVSRVQLAHPGTTVAEAAKQVQHNFLDAFNHQRTSLSDIQHALHLSERGLFNTTMIYKPKPMMDTHEKRSLVIESLAGEDPTEYDVQVKIVSDDKSLSLDLEYATTFIDEPSARRLLGSFGRALSSIAANPDANIDEIDVIPTGDVEVLHIWNSTVGETVPGSIHDKIHEQALSQPGAQAVCGWDGELTYAELTGMSDRLAHHLRNLGVREEVMVGLCFDKSMWTIVSMIAVLKSGGVIVPLGVQMPVQRLQHILNEITAPVVLTMDKHASKLRDITSANVLTIDGGFIATLPNPCHPPSESSLTSESAAVVIYTSGSTGTPKGVVLTHGTICTSIESHGPKLQMGPNTRALQYSAYVFDLSLLDILSTLRFGGCVCVVSEEDRVDTNSLTTKMEAMAVNFAVLTPTVASLIDPRTVPTLSTLVLAGEVVPHSAVETWASHVTLFNGYGPAESTILATTNGPIIEKEQASSVGTALAGAIWVVDTQDHNRLVPLGVVGELLISGPLVARGYLNDTERTSQSFITDPAFVSKYGFHSWAGKRIYKTGDLVRQDPTDGSIMFVGRADGQIKIRGQRVEVGEIEYWLRQHFDTQTVAVDVIGASTGDVALVAAIELRKDRSSNECVFLDVNHQLRESFLQLQAALLKALPSYMVPSKYIPIKNMPNTASGKLDRRALRTLIGGLKEEQLAQYSLADGGNVALSTETERRLARVWVAALNTSKEFGANAHFFRVGGDSVTAMRLVALARTAQPPILLSVSDVFKHPVLSDMANTIANSESTENCQYDNDVPPFLLLPYPQHERQARLQEIASQCKVEVDVIEDAYPCTPLQQGLMAITAQHPQAYISRWVFRLEDTIDESRFCQAWRTLVELNPILRTRIIQDPKAGGMQVVLQQQITWNNVLSELPSYIAEDSAKPMGFGDPLVRLAVVTSRQARFFVWTAHHSTYDGWTARKLMEAAFALYSNNPAPSFHPFTRFVQYLQSNSAEETRDYWKSQLEGGIGPSFPGSPKNGSPRKLRIQSCRIPANNSNDFTLSTLLRATWALILSQETGSQIVGFPTALSGRTAPVDGILDVLGPTITTVPIRVSVDPAQSLSAYLASIQQQATEMLPFEHAGLHNISRMTSLPLNFQHLFVVQPAVDRLDQANSGFQGLTPVPFETYGFHNYPLVIECSTNMTDTDSAVDLQLQFDPAVLSVEKATTILERFTHVFGQLQSAANEATCEVLVSDVIFMTPEDLGRIQKWNHFDERMTMADGCIHDLVHHQLLSCPDAQAVHAFDGHLTYRELHRLATRLAYHLEGLGVGPQVPVATIFEKTKWVVVTYLAVLKAGGTIVPVNHQHPKQRMQALVQSIGTRVILTSQDPGRLQGLVTGPVLKVDQDFFTQLPDSDNPHPVVQATDSAFIIFTSGSTGTSKAVVLQHGAIVSSMVQGHGSLYASPDTRAIQFSALNFDISIAEIFTTLSFGGCVCVISEDDRVSRLAEAMEEAAVNFAILTPTVASLLKPEQVPSLRRLLLVGEALRPEVAEPWSSSHVELHNAYGPAESSILTTFSQRIRDPVQAPNIGFPLAHSNLFVVDPSNYHNLLPVGMVGELLIEGPLLAREYLGDAKKTAEAFVTDPAWLQQYDLGPVSGRRFYRTGDLVQQKLDGSFIYIGRRDTQVKIHGQRVEIGEIEFWVKNKLPDVREVVAGLFKPIYEEDEPLLAVAMEVPSSSVESSGLLSLSDELREAFGELRRNLLTVVPSYMVPQLYLPFAKLPLTDSGKLNRRATWEMIHSCGSWSQYFLVDDIKAEPATVTERLLQSLWATVLKVPASSIGAKDDFFRSGGDSISAMRLVASAREDAHISLKVADVFRHPILSDMATLIDRKTTVTKPAYCPFSTMTDDYAIRDSIKPLLSVPSEIIDVAPTTDLQSLSIATSLRPSRDLMAYVSIDGIGSPNFARWRASCLEVVKKHDILRTAYVVYKNQLLQVVLRDYAPAVTHYQTDQSIEEFTKEFIAHDMHRPPQLGYPFLEFAIICSPVANRHRVLFRLSHAEYDAISLSYFVNSLREIYQRQSTTEYVGFPQYISSLANQDTWSSREYWRSLLKGCTMPAISSSSQPRRLPSRQVYHDSRRVSFKTLPAGITLSTIVRSAWALTLGQHVGNPDVLFGEVVSGRNGDPIAERAAGCCANLVPVRATIHPAWTTHDLLRSVQQQLVSRLPHESLGFRDLMRNCTDMPVGTVFTSLLNHLDQASEWTLDLDDGKYNVSVAKTEGAGDVSDVSVTSTASTDYVEIAMAYLEDGVTVEVAEKLLSQLCETVDAFMNGALDAELPTVDCVSELNAQGVNEAPKFEGDLVDASLVAFELQKRGHEVTVDEVVDRGLSLSGV.

In terms of domain architecture, Carrier 1 spans 17–93 (TNNEVVEKDI…ELCQSVKLAE (77 aa)). S54 carries the O-(pantetheine 4'-phosphoryl)serine modification. The epimerization 1 stretch occupies residues 123 to 427 (EAQKLYASTK…FLRKVKDTRM (305 aa)). The segment at 294–319 (FRRSTPVESTNDERNTNERQHNRHQN) is disordered. A compositionally biased stretch (basic and acidic residues) spans 304-319 (NDERNTNERQHNRHQN). The segment at 604–981 (LNVELDCGRL…ISTTQEINQL (378 aa)) is condensation 1. The segment at 1003 to 1394 (QRLRRPDAWA…GRRDTQIKVR (392 aa)) is adenylation 1. Residues 1531–1608 (EPETLLERQV…QLAQTAEVKD (78 aa)) enclose the Carrier 2 domain. S1569 carries the post-translational modification O-(pantetheine 4'-phosphoryl)serine. The tract at residues 1617 to 2031 (LLSPMQKWYF…ANAISALGTE (415 aa)) is epimerization 2. The condensation 2 stretch occupies residues 2072–2509 (VEDIYPCSPI…VGQLNTVTPK (438 aa)). The interval 2541-2930 (RPNATAVCAW…ARKDSQVKVR (390 aa)) is adenylation 2. The Carrier 3 domain occupies 3067–3143 (APSTFMEKKL…EMAAHLEAQM (77 aa)). At S3104 the chain carries O-(pantetheine 4'-phosphoryl)serine. Residues 3188–3599 (EDVYPCTPLQ…LLSKDEARRL (412 aa)) are condensation 3. The segment at 3620 to 4018 (QHVSTNPYAP…GRRDGQVKIR (399 aa)) is adenylation 3. Residues 4151–4228 (TPSTSEEKNI…QLAKKAVIKT (78 aa)) enclose the Carrier 4 domain. Residue S4188 is modified to O-(pantetheine 4'-phosphoryl)serine. Residues 4282–4708 (ESIYYCSPIQ…EIDVIPTGDV (427 aa)) form a condensation 4 region. The segment at 4732–5133 (EQALSQPGAQ…GRADGQIKIR (402 aa)) is adenylation 4. The 78-residue stretch at 5260–5337 (ALSTETERRL…DMANTIANSE (78 aa)) folds into the Carrier 5 domain. O-(pantetheine 4'-phosphoryl)serine is present on S5296. Residues 5380 to 5775 (EDAYPCTPLQ…VFGQLQSAAN (396 aa)) are condensation 5. Positions 5824-6216 (SCPDAQAVHA…IGRRDTQVKI (393 aa)) are adenylation 5. Positions 6344-6421 (EPATVTERLL…DMATLIDRKT (78 aa)) constitute a Carrier 6 domain. S6381 carries the post-translational modification O-(pantetheine 4'-phosphoryl)serine.

It participates in antibiotic biosynthesis. In terms of biological role, nonribosomal peptide synthetase; part of the gene cluster that mediates the biosynthesis of emericellamides, secondary metabolites acting as antibiotics. The biosynthesis of emericellamides initiates from the highly reducing polyketide synthase easB which catalyzes the formation of the linear polyketide chain. EasB produces several polyketides that can be further processed by the downstream enzymes. The polyketides are released from easB as linear polyketide carboxylic acids, which are converted to CoA thioesters by the acyl-CoA ligase easD. The substrates are then loaded onto the acyltransferase easC, which shuttles them to the first thiolation (T) domain of the nonribosomal peptide synthetase easA. EasA then performs condensation of the polyketides with one glycine, two alanine, one valine and one leucine residues. A last step of cyclization leads to the production of emericellamides. This Emericella nidulans (strain FGSC A4 / ATCC 38163 / CBS 112.46 / NRRL 194 / M139) (Aspergillus nidulans) protein is Nonribosomal peptide synthetase easA.